The primary structure comprises 254 residues: 30 kDa major early protein (254 aa).

This is 30 kDa major early protein from Human cytomegalovirus (strain Eisenhardt) (HHV-5).